Reading from the N-terminus, the 545-residue chain is CTP synthase (545 aa).

Residues 1 to 266 (MTTRYIFVTG…DDLVVKRFGL (266 aa)) form an amidoligase domain region. Residue serine 14 participates in CTP binding. Serine 14 is a binding site for UTP. ATP-binding positions include 15 to 20 (SLGKGI) and aspartate 72. Mg(2+)-binding residues include aspartate 72 and glutamate 140. CTP contacts are provided by residues 147–149 (DIE), 187–192 (KTKPTQ), and lysine 223. UTP contacts are provided by residues 187–192 (KTKPTQ) and lysine 223. Position 239–241 (239–241 (KDV)) interacts with ATP. In terms of domain architecture, Glutamine amidotransferase type-1 spans 291 to 542 (VIGMVGKYIE…IAAASAHQKR (252 aa)). L-glutamine is bound at residue glycine 352. Cysteine 379 acts as the Nucleophile; for glutamine hydrolysis in catalysis. L-glutamine contacts are provided by residues 380–383 (LGMQ), glutamate 403, and arginine 470. Catalysis depends on residues histidine 515 and glutamate 517.

Belongs to the CTP synthase family. In terms of assembly, homotetramer.

It catalyses the reaction UTP + L-glutamine + ATP + H2O = CTP + L-glutamate + ADP + phosphate + 2 H(+). The enzyme catalyses L-glutamine + H2O = L-glutamate + NH4(+). The catalysed reaction is UTP + NH4(+) + ATP = CTP + ADP + phosphate + 2 H(+). Its pathway is pyrimidine metabolism; CTP biosynthesis via de novo pathway; CTP from UDP: step 2/2. Its activity is regulated as follows. Allosterically activated by GTP, when glutamine is the substrate; GTP has no effect on the reaction when ammonia is the substrate. The allosteric effector GTP functions by stabilizing the protein conformation that binds the tetrahedral intermediate(s) formed during glutamine hydrolysis. Inhibited by the product CTP, via allosteric rather than competitive inhibition. Catalyzes the ATP-dependent amination of UTP to CTP with either L-glutamine or ammonia as the source of nitrogen. Regulates intracellular CTP levels through interactions with the four ribonucleotide triphosphates. This chain is CTP synthase, found in Shewanella baltica (strain OS223).